Reading from the N-terminus, the 169-residue chain is Acetolactate synthase small subunit (169 aa).

One can recognise an ACT domain in the interval 8–85; that stretch reads TLSVLVEDTP…KVVEQEADNS (78 aa).

It belongs to the acetolactate synthase small subunit family. Dimer of large and small chains.

It catalyses the reaction 2 pyruvate + H(+) = (2S)-2-acetolactate + CO2. Its pathway is amino-acid biosynthesis; L-isoleucine biosynthesis; L-isoleucine from 2-oxobutanoate: step 1/4. It functions in the pathway amino-acid biosynthesis; L-valine biosynthesis; L-valine from pyruvate: step 1/4. In Mycobacterium leprae (strain TN), this protein is Acetolactate synthase small subunit (ilvH).